A 1622-amino-acid chain; its full sequence is DNA (cytosine-5)-methyltransferase 1 (1622 aa).

The interval 1–145 (MPARTAPARV…RRSKSDSETM (145 aa)) is interaction with DNMT3A. 2 interaction with the PRC2/EED-EZH2 complex regions span residues 1 to 342 (MPAR…VERK) and 304 to 610 (TPEP…TVIN). Ser15 carries the phosphoserine modification. Positions 16–109 (PAGSLPDHVR…TQKANGCPAN (94 aa)) constitute a DMAP1-binding domain. Lys70 carries the post-translational modification N6,N6-dimethyllysine; by EHMT2. Residues 100 to 360 (TQKANGCPAN…IPKLNPPQCP (261 aa)) are disordered. The segment covering 126–137 (PRSRPKPRGPRR) has biased composition (basic residues). Residue Ser138 is modified to Phosphoserine. Residue Lys139 is modified to N6-methyllysine; by SETD7. A Phosphoserine; by PKB/AKT1 modification is found at Ser140. The interaction with DNMT3B stretch occupies residues 146–213 (IEASSSSVAT…TESRASRAGE (68 aa)). A phosphoserine mark is found at Ser149 and Ser151. Residues 149 to 166 (SSSSVATRRTTRQTTITS) are compositionally biased toward low complexity. Residue Thr163 is modified to Phosphothreonine. Residue Lys169 is modified to N6-acetyllysine. A Nuclear localization signal motif is present at residues 173–200 (KRKPKEDSEKGNANESAAEERDQDKKRR). Composition is skewed to basic and acidic residues over residues 176–197 (PKEDSEKGNANESAAEERDQDK), 207–222 (RASRAGESVEKPERVR), 237–269 (DDRRPRRQTRELASRRKSREDPDREARPGTHLD), and 276–300 (KDKRSSRPRSQPRDLATKRRPKEEV). Residue Thr304 is modified to Phosphothreonine. Residues 327–556 (KPEPLSIPVQ…NVNRFTEDSL (230 aa)) are DNA replication foci-targeting sequence. Positions 359 and 362 each coordinate Zn(2+). Lys372 is subject to N6-acetyllysine. Ser400 carries the phosphoserine modification. Zn(2+) contacts are provided by Cys420 and His424. Phosphoserine is present on residues Ser515 and Ser555. Residues 650-696 (NTMKRRRCGVCEVCQQPECGKCKACKDMVKFGGTGRSKQACLKRRCP) form a CXXC-type zinc finger. Zn(2+) contacts are provided by Cys657, Cys660, Cys663, Cys668, Cys671, Cys674, Cys690, and Cys695. An autoinhibitory linker region spans residues 697–758 (NLAVKEADED…TYYWKVSIDE (62 aa)). Positions 702 to 733 (EADEDEEADDDIPELPSPKKLHQGKKKKQNKD) are disordered. Residues 703–714 (ADEDEEADDDIP) are compositionally biased toward acidic residues. At Ser718 the chain carries Phosphoserine. Residues 720–731 (KKLHQGKKKKQN) are compositionally biased toward basic residues. A Phosphoserine modification is found at Ser736. Residue Lys753 is modified to N6-acetyllysine. The BAH 1 domain occupies 759–884 (ETLEVGDCVS…QDYARFESPP (126 aa)). Residue Ser882 is modified to Phosphoserine. An N6-acetyllysine mark is found at Lys895, Lys961, and Lys980. Positions 977–1105 (TYRKYSDYIK…SKTKSFEDPP (129 aa)) constitute a BAH 2 domain. A disordered region spans residues 1099–1138 (KSFEDPPNHARSPGNKGKGKGKGKGKGKPQVSEPKEPEAA). 6 repeat units span residues 1114–1115 (KG), 1116–1117 (KG), 1118–1119 (KG), 1120–1121 (KG), 1122–1123 (KG), and 1124–1125 (KG). The tract at residues 1114-1127 (KGKGKGKGKGKGKP) is 7 X 2 AA tandem repeats of K-G. A compositionally biased stretch (basic residues) spans 1115–1125 (GKGKGKGKGKG). An N6-acetyllysine mark is found at Lys1116, Lys1118, Lys1120, Lys1122, Lys1124, and Lys1126. One copy of the 7; approximate repeat lies at 1126–1127 (KP). The interval 1126–1622 (KPQVSEPKEP…KGKEETTTED (497 aa)) is interaction with the PRC2/EED-EZH2 complex. The 460-residue stretch at 1144–1603 (LRTLDVFSGC…LEIKLCLLAS (460 aa)) folds into the SAM-dependent MTase C5-type domain. The segment at 1144 to 1622 (LRTLDVFSGC…KGKEETTTED (479 aa)) is catalytic. S-adenosyl-L-methionine is bound by residues Ser1151, 1155–1156 (GL), 1173–1174 (EM), 1195–1196 (DC), and Cys1196. Cys1231 is an active-site residue. Lys1354 bears the N6-acetyllysine mark. Ser1436 is subject to Phosphoserine. S-adenosyl-L-methionine-binding residues include Asn1582 and Val1584. Lys1613 is covalently cross-linked (Glycyl lysine isopeptide (Lys-Gly) (interchain with G-Cter in SUMO2)).

The protein belongs to the class I-like SAM-binding methyltransferase superfamily. C5-methyltransferase family. As to quaternary structure, homodimer. Forms a stable complex with E2F1, BB1 and HDAC1. Forms a complex with DMAP1 and HDAC2, with direct interaction. Interacts with the PRC2/EED-EZH2 complex. Probably part of a corepressor complex containing ZNF304, TRIM28, SETDB1 and DNMT1. Interacts with UHRF1; promoting its recruitment to hemimethylated DNA. Interacts with USP7, promoting its deubiquitination. Interacts with PCNA. Interacts with MBD2 and MBD3. Interacts with DNMT3A and DNMT3B. Interacts with UBC9. Interacts with CSNK1D. Interacts with HDAC1. Interacts with BAZ2A/TIP5. Interacts with SIRT7. Interacts with ZNF263; recruited to the SIX3 promoter along with other proteins involved in chromatin modification and transcriptional corepression where it contributes to transcriptional repression. Interacts with L3MBTL3 and DCAF5; the interaction requires DNMT1 methylation at Lys-139 and is necessary to target DNMT1 for ubiquitination by the CRL4-DCAF5 E3 ubiquitin ligase complex and proteasomal degradation. Interacts with PHF20L1; the interaction requires DNMT1 methylation at Lys-139 and protects DNMT1 from ubiquitination and proteasomal degradation. In terms of processing, sumoylated; sumoylation increases activity. Acetylation on multiple lysines, mainly by KAT2B/PCAF, regulates cell cycle G(2)/M transition. Deacetylation of Lys-1116 and Lys-1354 by SIRT1 increases methyltransferase activity. Post-translationally, phosphorylation of Ser-151 by CDKs is important for enzymatic activity and protein stability. Phosphorylation of Ser-140 by AKT1 prevents methylation by SETD7 thereby increasing DNMT1 stability. In terms of processing, methylation at Lys-139 by SETD7 is necessary for the regulation of DNMT1 proteasomal degradation. Ubiquitinated by UHRF1; interaction with USP7 counteracts ubiquitination by UHRF1 by promoting deubiquitination and preventing degradation by the proteasome. As to expression, isoforms 0 and 8 are highly expressed in placenta, brain, lung, spleen, kidney, heart, and at much lower levels in liver. Isoform 1 is expressed in cerebellum, isoform 2 in muscle and testis, isoform 3 in lung, isoform 4 in spleen and brain, and isoform 5 in brain.

It is found in the nucleus. It carries out the reaction a 2'-deoxycytidine in DNA + S-adenosyl-L-methionine = a 5-methyl-2'-deoxycytidine in DNA + S-adenosyl-L-homocysteine + H(+). In terms of biological role, methylates CpG residues. Preferentially methylates hemimethylated DNA. Associates with DNA replication sites in S phase maintaining the methylation pattern in the newly synthesized strand, that is essential for epigenetic inheritance. Associates with chromatin during G2 and M phases to maintain DNA methylation independently of replication. It is responsible for maintaining methylation patterns established in development. DNA methylation is coordinated with methylation of histones. Mediates transcriptional repression by direct binding to HDAC2. In association with DNMT3B and via the recruitment of CTCFL/BORIS, involved in activation of BAG1 gene expression by modulating dimethylation of promoter histone H3 at H3K4 and H3K9. Probably forms a corepressor complex required for activated KRAS-mediated promoter hypermethylation and transcriptional silencing of tumor suppressor genes (TSGs) or other tumor-related genes in colorectal cancer (CRC) cells. Also required to maintain a transcriptionally repressive state of genes in undifferentiated embryonic stem cells (ESCs). Associates at promoter regions of tumor suppressor genes (TSGs) leading to their gene silencing. Promotes tumor growth. The protein is DNA (cytosine-5)-methyltransferase 1 (Dnmt1) of Rattus norvegicus (Rat).